The chain runs to 201 residues: 3-isopropylmalate dehydratase small subunit (201 aa).

This sequence belongs to the LeuD family. LeuD type 1 subfamily. As to quaternary structure, heterodimer of LeuC and LeuD.

The catalysed reaction is (2R,3S)-3-isopropylmalate = (2S)-2-isopropylmalate. The protein operates within amino-acid biosynthesis; L-leucine biosynthesis; L-leucine from 3-methyl-2-oxobutanoate: step 2/4. Catalyzes the isomerization between 2-isopropylmalate and 3-isopropylmalate, via the formation of 2-isopropylmaleate. The sequence is that of 3-isopropylmalate dehydratase small subunit from Rhodopseudomonas palustris (strain BisB18).